Consider the following 179-residue polypeptide: Large ribosomal subunit protein uL5 (179 aa).

This sequence belongs to the universal ribosomal protein uL5 family. As to quaternary structure, part of the 50S ribosomal subunit; part of the 5S rRNA/L5/L18/L25 subcomplex. Contacts the 5S rRNA and the P site tRNA. Forms a bridge to the 30S subunit in the 70S ribosome.

In terms of biological role, this is one of the proteins that bind and probably mediate the attachment of the 5S RNA into the large ribosomal subunit, where it forms part of the central protuberance. In the 70S ribosome it contacts protein S13 of the 30S subunit (bridge B1b), connecting the 2 subunits; this bridge is implicated in subunit movement. Contacts the P site tRNA; the 5S rRNA and some of its associated proteins might help stabilize positioning of ribosome-bound tRNAs. The sequence is that of Large ribosomal subunit protein uL5 from Dictyoglomus thermophilum (strain ATCC 35947 / DSM 3960 / H-6-12).